The sequence spans 201 residues: dCTP deaminase, dUMP-forming (201 aa).

DCTP-binding positions include 101–106, aspartate 119, 127–129, glutamine 148, tyrosine 162, and glutamine 174; these read KSSLGR and TLE. Glutamate 129 acts as the Proton donor/acceptor in catalysis.

Belongs to the dCTP deaminase family. As to quaternary structure, homotrimer.

The enzyme catalyses dCTP + 2 H2O = dUMP + NH4(+) + diphosphate. The protein operates within pyrimidine metabolism; dUMP biosynthesis; dUMP from dCTP: step 1/1. In terms of biological role, bifunctional enzyme that catalyzes both the deamination of dCTP to dUTP and the hydrolysis of dUTP to dUMP without releasing the toxic dUTP intermediate. The protein is dCTP deaminase, dUMP-forming of Parafrankia sp. (strain EAN1pec).